We begin with the raw amino-acid sequence, 35 residues long: Photosystem II reaction center protein T (35 aa).

Residues 3–23 (ALVYTFLLVSTLGIIFFAIFF) form a helical membrane-spanning segment.

This sequence belongs to the PsbT family. As to quaternary structure, PSII is composed of 1 copy each of membrane proteins PsbA, PsbB, PsbC, PsbD, PsbE, PsbF, PsbH, PsbI, PsbJ, PsbK, PsbL, PsbM, PsbT, PsbY, PsbZ, Psb30/Ycf12, at least 3 peripheral proteins of the oxygen-evolving complex and a large number of cofactors. It forms dimeric complexes.

The protein localises to the plastid. The protein resides in the chloroplast thylakoid membrane. Functionally, found at the monomer-monomer interface of the photosystem II (PS II) dimer, plays a role in assembly and dimerization of PSII. PSII is a light-driven water plastoquinone oxidoreductase, using light energy to abstract electrons from H(2)O, generating a proton gradient subsequently used for ATP formation. The protein is Photosystem II reaction center protein T of Asarum canadense (Wild ginger).